Here is a 270-residue protein sequence, read N- to C-terminus: ATP synthase subunit a (270 aa).

5 consecutive transmembrane segments (helical) span residues 38–58 (VHID…GIFY), 98–118 (IAPL…MDLV), 143–163 (DVNI…YYSI), 208–228 (LFGN…MLPW), and 239–259 (AIFH…LTIV).

It belongs to the ATPase A chain family. In terms of assembly, F-type ATPases have 2 components, CF(1) - the catalytic core - and CF(0) - the membrane proton channel. CF(1) has five subunits: alpha(3), beta(3), gamma(1), delta(1), epsilon(1). CF(0) has three main subunits: a(1), b(2) and c(9-12). The alpha and beta chains form an alternating ring which encloses part of the gamma chain. CF(1) is attached to CF(0) by a central stalk formed by the gamma and epsilon chains, while a peripheral stalk is formed by the delta and b chains.

The protein resides in the cell inner membrane. Its function is as follows. Key component of the proton channel; it plays a direct role in the translocation of protons across the membrane. This Vibrio parahaemolyticus serotype O3:K6 (strain RIMD 2210633) protein is ATP synthase subunit a.